A 156-amino-acid polypeptide reads, in one-letter code: Small ribosomal subunit protein bS16 (156 aa).

Low complexity-rich tracts occupy residues 113–123 and 137–156; these read AESGTTAAATT and EAPA…ASES. The interval 113–156 is disordered; it reads AESGTTAAATTPKKKKAPKKDEAAEAPAEAAEAPAEAADAASES.

Belongs to the bacterial ribosomal protein bS16 family.

The chain is Small ribosomal subunit protein bS16 from Mycolicibacterium smegmatis (strain ATCC 700084 / mc(2)155) (Mycobacterium smegmatis).